Reading from the N-terminus, the 825-residue chain is BEN domain-containing protein 3 (825 aa).

Residues 1–11 show a composition bias toward acidic residues; the sequence is MNSTEISEDVE. Residues 1–35 form a disordered region; sequence MNSTEISEDVEEVLKNNPVKAEGSDATLDCSRNSR. Lysine 20 is covalently cross-linked (Glycyl lysine isopeptide (Lys-Gly) (interchain with G-Cter in SUMO); alternate). Lysine 20 participates in a covalent cross-link: Glycyl lysine isopeptide (Lys-Gly) (interchain with G-Cter in SUMO1); alternate. Residue lysine 20 forms a Glycyl lysine isopeptide (Lys-Gly) (interchain with G-Cter in SUMO2); alternate linkage. Residues lysine 39, lysine 54, lysine 56, lysine 71, lysine 126, lysine 127, lysine 135, lysine 140, lysine 156, and lysine 174 each participate in a glycyl lysine isopeptide (Lys-Gly) (interchain with G-Cter in SUMO2) cross-link. The disordered stretch occupies residues 52-122; it reads SSKRKQLDSD…EEEPSTEATV (71 aa). The Nuclear localization signal signature appears at 54-56; it reads KRK. Residues 239–340 form the BEN 1 domain; the sequence is PPPEYQLTAS…DFFSRFWAQR (102 aa). Residue serine 376 is modified to Phosphoserine. Positions 384 to 484 constitute a BEN 2 domain; sequence ASDHVVDTQD…DELEGLGLEG (101 aa). Lysine 424 participates in a covalent cross-link: Glycyl lysine isopeptide (Lys-Gly) (interchain with G-Cter in SUMO2). Phosphoserine is present on serine 486. Residue lysine 509 forms a Glycyl lysine isopeptide (Lys-Gly) (interchain with G-Cter in SUMO); alternate linkage. Lysine 509 participates in a covalent cross-link: Glycyl lysine isopeptide (Lys-Gly) (interchain with G-Cter in SUMO2); alternate. Lysine 525 participates in a covalent cross-link: Glycyl lysine isopeptide (Lys-Gly) (interchain with G-Cter in SUMO2). The BEN 3 domain maps to 547-647; the sequence is GSDCLLSKEQ…ERCRRRDTEQ (101 aa). Lysine 697 participates in a covalent cross-link: Glycyl lysine isopeptide (Lys-Gly) (interchain with G-Cter in SUMO2). In terms of domain architecture, BEN 4 spans 712–813; sequence VPSPYLLSDK…ERCRRPNRKK (102 aa).

In terms of assembly, homooligomer, probably a homooctamer. Interacts with HDAC2 and HDAC3, but not HDAC1. Interacts with SALL4. Interacts with SMARCA5/SNF2H, BAZ2A/TIP5 and USP21. Interacts with the nucleosome remodeling and histone deacetylase (NuRD) repressor complex. Interacts (via BEN domains 1 and 3) with ERCC6L (via N-terminal TPR repeat); the interaction is direct. In terms of processing, sumoylated at Lys-20 by SUMO1 and at Lys-509 by SUMO1, SUMO2 and SUMO3. Sumoylation probably occurs sequentially, with that of Lys-20 preceding that of Lys-509. It does not alter association with heterochromatin, but is required for the repression of transcription.

It localises to the nucleus. The protein resides in the nucleolus. In terms of biological role, transcriptional repressor which associates with the NoRC (nucleolar remodeling complex) complex and plays a key role in repressing rDNA transcription. The sumoylated form modulates the stability of the NoRC complex component BAZ2A/TIP5 by controlling its USP21-mediated deubiquitination. Binds to unmethylated major satellite DNA and is involved in the recruitment of the Polycomb repressive complex 2 (PRC2) to major satellites. Stimulates the ERCC6L translocase and ATPase activities. This chain is BEN domain-containing protein 3 (Bend3), found in Mus musculus (Mouse).